The sequence spans 96 residues: Invertase 7 (96 aa).

The first 19 residues, 1-19 (MLLQAFIFLLAGFAAKISA), serve as a signal peptide directing secretion. An N-linked (GlcNAc...) asparagine glycan is attached at Asn23. Substrate contacts are provided by residues 39-42 (WMND) and Gln60. Asp42 is an active-site residue. N-linked (GlcNAc...) asparagine glycosylation is found at Asn64 and Asn76.

It belongs to the glycosyl hydrolase 32 family.

The enzyme catalyses Hydrolysis of terminal non-reducing beta-D-fructofuranoside residues in beta-D-fructofuranosides.. The chain is Invertase 7 (SUC7) from Saccharomyces cerevisiae (Baker's yeast).